A 944-amino-acid polypeptide reads, in one-letter code: snRNA-activating protein complex subunit 4 homolog (944 aa).

The interval 1-22 (MSDLVMFEPGASTSTDVPTNTD) is disordered. A compositionally biased stretch (polar residues) spans 11–22 (ASTSTDVPTNTD). The Myb-like 1 domain occupies 177–244 (TSNFDRRQWT…AVKSKWYNEL (68 aa)). In terms of domain architecture, HTH myb-type 1 spans 245 to 301 (NPKWNKEHWSNEEVEKLKYLRESPKFVSWPMLALNLGTNRTSYQCMEKYKTEVSQHS). A DNA-binding region (H-T-H motif) is located at residues 273–297 (WPMLALNLGTNRTSYQCMEKYKTEV). In terms of domain architecture, Myb-like 2 spans 304-350 (WSQDEDTKLIALTKITSINGHIQWDKVAQCMPGRTRQQVRTRFSHTL). HTH myb-type domains lie at 351–406 (DASV…NRSA) and 407–459 (HVNE…AAKL). DNA-binding regions (H-T-H motif) lie at residues 379–402 (WAKVAQAVQNRNDSQCRERWTNVL) and 432–455 (WAKCQMLLPKKTSRQLRRRYLQLI). Low complexity predominate over residues 911 to 921 (ARPARPPRSSA). Residues 911–935 (ARPARPPRSSAGTPTPSHVSIDTES) are disordered. A compositionally biased stretch (polar residues) spans 922-935 (GTPTPSHVSIDTES).

As to expression, broadly expressed in all tissues, including head, vulva and tail.

The protein resides in the nucleus. Its function is as follows. Binds to the promoter regions of RNA polymerase II and III small-nuclear RNA genes, type 3 RNA polymerase III non-coding RNA genes, small nucleolar RNAs and transfer RNA genes. Required for expression of mature 21U-RNAs. In Caenorhabditis elegans, this protein is snRNA-activating protein complex subunit 4 homolog.